The following is a 218-amino-acid chain: Cytochrome b6 (218 aa).

The chain crosses the membrane as a helical span at residues 35–55 (IFYCLGGITLVCFLIQFATGF). Cys-38 contributes to the heme c binding site. Positions 89 and 103 each coordinate heme b. A run of 3 helical transmembrane segments spans residues 93–113 (ASMMVLMLILHVFRVYLTGGF), 119–139 (LTWVTGVVMAVITVAFGVTGY), and 189–209 (LHTFVLPWSLAVFMLMHFLMI). Residues His-190 and His-205 each coordinate heme b.

This sequence belongs to the cytochrome b family. PetB subfamily. The 4 large subunits of the cytochrome b6-f complex are cytochrome b6, subunit IV (17 kDa polypeptide, PetD), cytochrome f and the Rieske protein, while the 4 small subunits are PetG, PetL, PetM and PetN. The complex functions as a dimer. The cofactor is heme b. Requires heme c as cofactor.

The protein localises to the cellular thylakoid membrane. Component of the cytochrome b6-f complex, which mediates electron transfer between photosystem II (PSII) and photosystem I (PSI), cyclic electron flow around PSI, and state transitions. The chain is Cytochrome b6 from Prochlorococcus marinus (strain MIT 9215).